Consider the following 611-residue polypeptide: Actin-binding LIM protein 2 (611 aa).

4 LIM zinc-binding domains span residues 22-81, 81-141, 151-210, and 210-270; these read ILCN…LYGT, TRCF…VSVG, RSCG…KFGI, and IRCD…ARTE. The Zn(2+) site is built by Cys83, Cys86, His103, Cys106, Cys109, Cys112, Cys131, and Cys134. Zn(2+) is bound by residues Cys212, Cys215, His232, Cys235, Cys238, Cys241, His260, and Cys263. The segment covering 269–278 has biased composition (basic and acidic residues); that stretch reads TEDRNKETRT. 2 disordered regions span residues 269 to 295 and 336 to 527; these read TEDR…SGSP and YISH…DQRN. Composition is skewed to low complexity over residues 279–295 and 363–372; these read SSES…SGSP and SSPSSTGSVS. A phosphoserine mark is found at Ser282, Ser294, Ser364, and Ser367. Over residues 393-404 the composition is skewed to polar residues; the sequence is SGRSTPSLSVLS. At Ser452 the chain carries Phosphoserine. A Phosphothreonine modification is found at Thr472. Polar residues predominate over residues 473-488; sequence RTNSPDLDTQSLSHSS. Residues Ser476 and Ser578 each carry the phosphoserine modification. One can recognise an HP domain in the interval 543–611; that stretch reads MREYKIYPYD…NDLKKKALLF (69 aa).

Interacts with F-actin and ABRA. In terms of tissue distribution, highly expressed in skeletal muscle.

It localises to the cytoplasm. Its function is as follows. May act as scaffold protein. May stimulate ABRA activity and ABRA-dependent SRF transcriptional activity. This chain is Actin-binding LIM protein 2 (ABLIM2), found in Homo sapiens (Human).